A 101-amino-acid polypeptide reads, in one-letter code: Large ribosomal subunit protein uL24 (101 aa).

The protein belongs to the universal ribosomal protein uL24 family. Part of the 50S ribosomal subunit.

Functionally, one of two assembly initiator proteins, it binds directly to the 5'-end of the 23S rRNA, where it nucleates assembly of the 50S subunit. In terms of biological role, one of the proteins that surrounds the polypeptide exit tunnel on the outside of the subunit. The polypeptide is Large ribosomal subunit protein uL24 (Borrelia recurrentis (strain A1)).